The primary structure comprises 178 residues: Protein GrpE (178 aa).

The segment covering 1–11 (MAEDQAPREET) has biased composition (basic and acidic residues). A disordered region spans residues 1–30 (MAEDQAPREETVEAPELTEAPEIDELETLR).

The protein belongs to the GrpE family. In terms of assembly, homodimer.

Its subcellular location is the cytoplasm. Functionally, participates actively in the response to hyperosmotic and heat shock by preventing the aggregation of stress-denatured proteins, in association with DnaK and GrpE. It is the nucleotide exchange factor for DnaK and may function as a thermosensor. Unfolded proteins bind initially to DnaJ; upon interaction with the DnaJ-bound protein, DnaK hydrolyzes its bound ATP, resulting in the formation of a stable complex. GrpE releases ADP from DnaK; ATP binding to DnaK triggers the release of the substrate protein, thus completing the reaction cycle. Several rounds of ATP-dependent interactions between DnaJ, DnaK and GrpE are required for fully efficient folding. This Cereibacter sphaeroides (strain ATCC 17023 / DSM 158 / JCM 6121 / CCUG 31486 / LMG 2827 / NBRC 12203 / NCIMB 8253 / ATH 2.4.1.) (Rhodobacter sphaeroides) protein is Protein GrpE.